Consider the following 93-residue polypeptide: YcgL domain-containing protein Swoo_2115 (93 aa).

In terms of domain architecture, YcgL spans 1–85; sequence MICAVYKSRR…PVVNLLEEHK (85 aa).

The chain is YcgL domain-containing protein Swoo_2115 from Shewanella woodyi (strain ATCC 51908 / MS32).